The sequence spans 591 residues: uncharacterized protein (591 aa).

A run of 4 helical transmembrane segments spans residues 389-409 (VYLG…SALI), 411-431 (GGSP…GGIL), 538-558 (GILP…FALS), and 571-591 (PIIS…FNLL).

The protein localises to the membrane. This is an uncharacterized protein from Mycoplasma (Bacteriophage L2).